The chain runs to 272 residues: Potassium channel regulatory protein (272 aa).

The 102-residue stretch at 5–106 (ELVTLNVGGK…LLNPYLLQPR (102 aa)) folds into the BTB domain.

As to quaternary structure, can form homooligomers. Interacts with KCNA1 (via cytoplasmic N-terminal domain) and KCNA4. Ubiquitous in normal tissues and expressed in some tumor tissues.

The protein localises to the endoplasmic reticulum. Inhibits potassium fluxes in cells. May regulate Kv1 family channel proteins by retaining a fraction of channels in endomembranes. This Homo sapiens (Human) protein is Potassium channel regulatory protein (KCNRG).